The sequence spans 314 residues: Protein EXORDIUM (314 aa).

An N-terminal signal peptide occupies residues 1 to 21; that stretch reads MYLLVFKLFLFLSLLQISVSA.

Belongs to the EXORDIUM family. Expressed in root tips, vascular tissue of roots, shoot apex, rosette leaves and embryos.

It is found in the secreted. Its subcellular location is the extracellular space. The protein localises to the apoplast. Its function is as follows. Required for cell expansion in leaves. May mediate brassinosteroid (BR)-induced leaf growth. May play a role in the control of BR responses in roots. May be involved in signaling processes that coordinate BR responses with environmental or developmental signals. This chain is Protein EXORDIUM (EXO), found in Arabidopsis thaliana (Mouse-ear cress).